Consider the following 781-residue polypeptide: Catenin beta-1 (781 aa).

Position 2 is an N-acetylalanine (A2). Residues 2–23 are interaction with VCL; that stretch reads ATQADLMELDMAMEPDRKAAVS. The residue at position 23 (S23) is a Phosphoserine; by GSK3-beta; alternate. A glycan (O-linked (GlcNAc) serine; alternate) is linked at S23. At S29 the chain carries Phosphoserine; by GSK3-beta. Residues S33 and S37 each carry the phosphoserine; by GSK3-beta and HIPK2 modification. A disordered region spans residues 34–57; it reads GIHSGATTTAPSLSGKGNPEEEDV. The residue at position 41 (T41) is a Phosphothreonine; by GSK3-beta. At S45 the chain carries Phosphoserine. At K49 the chain carries N6-acetyllysine. Y64 bears the Phosphotyrosine; by PTK6 mark. Y142 carries the post-translational modification Phosphotyrosine; by FYN and PTK6. 12 ARM repeats span residues 151-191, 193-234, 235-276, 277-318, 319-360, 361-389, 400-441, 442-484, 489-530, 531-571, 594-636, and 637-666; these read RAIP…IMRS, QMVS…IFKS, GGIP…VRLA, GGLQ…ILAS, GGPQ…IVEA, GGMQALGPHLTDPSQRLVQNCLWTLRNLS, GLLG…VCQV, GGIE…AQNA, YGLP…LREQ, GAIP…EIVE, NTIP…AEGA, and TAPLTELLHSRNEGVATYAAAVLFRMSEDK. The segment at 156-178 is interaction with BCL9; the sequence is LTKLLNDEDQVVVNKAAVMVHQL. A Phosphoserine modification is found at S191. Residue S246 is modified to Phosphoserine; by CDK5. A phosphotyrosine mark is found at Y331 and Y333. Position 552 is a phosphoserine (S552). T556 is subject to Phosphothreonine. C619 carries the S-nitrosocysteine modification. S675 is subject to Phosphoserine. The disordered stretch occupies residues 720 to 781; it reads HSGGYGQDAL…NQLAWFDTDL (62 aa). The span at 734-745 shows a compositional bias: basic and acidic residues; the sequence is MMEHEMGGHHPG. Positions 772–781 are interaction with SCRIB; the sequence is NQLAWFDTDL.

This sequence belongs to the beta-catenin family. In terms of assembly, two separate complex-associated pools are found in the cytoplasm. The majority is present as component of an E-cadherin/ catenin adhesion complex composed of at least E-cadherin/CDH1 and beta-catenin/CTNNB1, and possibly alpha-catenin/CTNNA1; the complex is located to adherens junctions. The stable association of CTNNA1 is controversial as CTNNA1 was shown not to bind to F-actin when assembled in the complex. Alternatively, the CTNNA1-containing complex may be linked to F-actin by other proteins such as LIMA1. Another cytoplasmic pool is part of a large complex containing AXIN1, AXIN2, APC, CSNK1A1 and GSK3B that promotes phosphorylation on N-terminal Ser and Thr residues and ubiquitination of CTNNB1. Interacts directly with AXIN1; the interaction is regulated by CK2 via BTRC and its subsequent degradation by the proteasome. Interacts directly with AXIN1; the interaction is regulated by CDK2 phosphorylation. Wnt-dependent activation of DVL antagonizes the action of GSK3B. When GSK3B activity is inhibited the complex dissociates, CTNNB1 is dephosphorylated and is no longer targeted for destruction. The stabilized protein translocates to the nucleus, where it binds TCF/LEF-1 family members, BCL9, BCL9L and possibly also RUVBL1 and CHD8. Binds CTNNBIP and EP300. CTNNB1 forms a ternary complex with LEF1 and EP300 that is disrupted by CTNNBIP1 binding. Interacts with TAX1BP3 (via the PDZ domain); this interaction inhibits the transcriptional activity of CTNNB1. Interacts with AJAP1, BAIAP1, CARM1, CTNNA3, CXADR and PCDH11Y. Binds NHERF1. Interacts with GLIS2. Interacts with XIRP1. Interacts with PTPRU (via the cytoplasmic juxtamembrane domain) and with SLC30A9. Interacts with EMD. Interacts with SCRIB. Interacts with TNIK and TCF7L2. Interacts with SESTD1 and TRPC4. Interacts directly with AXIN1; the interaction is regulated by CDK2 phosphorylation of AXIN1. Interacts with CAV1. Interacts with TRPV4. The TRPV4 and CTNNB1 complex can interact with CDH1. Interacts with VCL. Interacts with PTPRJ. Interacts with PKT7. Interacts with NANOS1. Interacts with CDK2, NDRG2, NEK2 and CDK5. Found in a complex composed of MACF1, APC, AXIN1, CTNNB1 and GSK3B. Interacts with PTK6. Interacts with SOX7; this interaction may lead to proteasomal degradation of active CTNNB1 and thus inhibition of Wnt/beta-catenin-stimulated transcription. Identified in a complex with HINT1 and MITF. Interacts with FHIT. The CTNNB1 and TCF4 complex interacts with PML. Interacts with FERMT2. Identified in a complex with TCF4 and FERMT2. Interacts with RAPGEF2. Interacts with FAT1 (via the cytoplasmic domain). Interacts with RORA. May interact with P-cadherin/CDH3. Interacts with RNF220. Interacts with CTNND2. Interacts (via the C-terminal region) with CBY1. The complex composed, at least, of APC, CTNNB1 and GSK3B interacts with JPT1; the interaction requires the inactive form of GSK3B (phosphorylated at 'Ser-9'). Interacts with DLG5. Interacts with FAM53B; promoting translocation to the nucleus. Interacts with TMEM170B. Interacts with AHI1. Interacts with GID8. Component of an cadherin:catenin adhesion complex composed of at least of CDH26, beta-catenin/CTNNB1, alpha-catenin/CTNNA1 and p120 catenin/CTNND1. Forms a complex comprising APPL1, RUVBL2, APPL2, HDAC1 and HDAC2. Interacts with IRF2BPL; mediates the ubiquitination and degradation of CTNNB1. Interacts with AMFR. Interacts with LMBR1L. Interacts with SOX30; prevents interaction of CTNNB1 with TCF7L2/TCF4 and leads to inhibition of Wnt signaling. Interacts with SOX9; inhibiting CTNNB1 activity by competing with the binding sites of TCF/LEF within CTNNB1, thereby inhibiting the Wnt signaling. Interacts with SPN/CD43 cytoplasmic tail. Interacts (when phosphorylated at Tyr-333) with isoform M2 of PKM (PKM2); promoting transcription activation. Interacts with PKP2 (via HEAD domain). Interacts with CDH1. Interacts (when unphosphorylated) with FLYWCH1, perhaps preventing interaction of CTNNB1 with TCF4, and thereby regulating transcription activation; phosphorylation of CTNNB1 may inhibit the interaction. Interacts (via the central armadillo domains) with probable transcriptional regulator ADNP (via N-terminal region); interaction is direct and stabilizes CTNNB1 by modulating its phosphorylation by glycogen synthase kinase-3 beta GSK3B. Interacts with NR5A2. Interacts with DSG2; the interaction promotes localization of CTNNB1 at cell junctions thus reducing its nuclear localization and subsequent transcription of CTNNB1/TCF-target genes. In terms of processing, phosphorylation by GSK3B requires prior phosphorylation of Ser-45 by another kinase. Phosphorylation proceeds then from Thr-41 to Ser-33. Phosphorylated by NEK2. EGF stimulates tyrosine phosphorylation. Phosphorylated on Ser-33 and Ser-37 by HIPK2. This phosphorylation triggers proteasomal degradation. Phosphorylation at Ser-552 by AMPK promotes stabilization of the protein, enhancing TCF/LEF-mediated transcription. Phosphorylation on Ser-191 and Ser-246 by CDK5. Phosphorylation by CDK2 regulates insulin internalization. Phosphorylation by PTK6 at Tyr-64, Tyr-142, Tyr-331 and/or Tyr-333 with the predominant site at Tyr-64 is not essential for inhibition of transcriptional activity. Phosphorylation by SRC at Tyr-333 promotes interaction with isoform M2 of PKM (PKM2); promoting transcription activation. Post-translationally, ubiquitinated by the SCF(BTRC) E3 ligase complex when phosphorylated by GSK3B, leading to its degradation. Ubiquitinated by a E3 ubiquitin ligase complex containing UBE2D1, SIAH1, CACYBP/SIP, SKP1, APC and TBL1X, leading to its subsequent proteasomal degradation. Ubiquitinated and degraded following interaction with SOX9. Ubiquitinated via 'Lys-11'- and 'Lys-29'-linked ubiquitin chains by UBR5, leading to its stabilization. S-nitrosylation at Cys-619 within adherens junctions promotes VEGF-induced, NO-dependent endothelial cell permeability by disrupting interaction with E-cadherin, thus mediating disassembly adherens junctions. In terms of processing, O-glycosylation at Ser-23 decreases nuclear localization and transcriptional activity, and increases localization to the plasma membrane and interaction with E-cadherin CDH1. Post-translationally, deacetylated at Lys-49 by SIRT1. In terms of tissue distribution, expressed in the testis.

It is found in the cytoplasm. It localises to the nucleus. The protein resides in the cytoskeleton. The protein localises to the cell junction. Its subcellular location is the adherens junction. It is found in the cell membrane. It localises to the microtubule organizing center. The protein resides in the centrosome. The protein localises to the spindle pole. Its subcellular location is the synapse. It is found in the cilium basal body. Functionally, key downstream component of the canonical Wnt signaling pathway. In the absence of Wnt, forms a complex with AXIN1, AXIN2, APC, CSNK1A1 and GSK3B that promotes phosphorylation on N-terminal Ser and Thr residues and ubiquitination of CTNNB1 via BTRC and its subsequent degradation by the proteasome. In the presence of Wnt ligand, CTNNB1 is not ubiquitinated and accumulates in the nucleus, where it acts as a coactivator for transcription factors of the TCF/LEF family, leading to activate Wnt responsive genes. Also acts as a coactivator for other transcription factors, such as NR5A2. Promotes epithelial to mesenchymal transition/mesenchymal to epithelial transition (EMT/MET) via driving transcription of CTNNB1/TCF-target genes. Involved in the regulation of cell adhesion, as component of an E-cadherin:catenin adhesion complex. Acts as a negative regulator of centrosome cohesion. Involved in the CDK2/PTPN6/CTNNB1/CEACAM1 pathway of insulin internalization. Blocks anoikis of malignant kidney and intestinal epithelial cells and promotes their anchorage-independent growth by down-regulating DAPK2. Disrupts PML function and PML-NB formation by inhibiting RANBP2-mediated sumoylation of PML. Promotes neurogenesis by maintaining sympathetic neuroblasts within the cell cycle. Involved in chondrocyte differentiation via interaction with SOX9: SOX9-binding competes with the binding sites of TCF/LEF within CTNNB1, thereby inhibiting the Wnt signaling. Acts as a positive regulator of odontoblast differentiation during mesenchymal tooth germ formation, via promoting the transcription of differentiation factors such as LEF1, BMP2 and BMP4. Activity is repressed in a MSX1-mediated manner at the bell stage of mesenchymal tooth germ formation which prevents premature differentiation of odontoblasts. In Rattus norvegicus (Rat), this protein is Catenin beta-1.